Consider the following 528-residue polypeptide: Zinc finger protein 16-like (528 aa).

Residues 1–28 (MSRKRNHCYMETGASSESQGAFVDSAGP) form a disordered region. Positions 79–106 (IRVLKMELREKSDEIELLKAKLESAEKD) form a coiled coil. Disordered stretches follow at residues 159 to 202 (GAAE…TDAE) and 232 to 293 (FKGD…DRME). A compositionally biased stretch (basic and acidic residues) spans 232 to 242 (FKGDSETKCED). Positions 244–256 (PPMDEEDENEDSE) are enriched in acidic residues. Composition is skewed to basic and acidic residues over residues 257-270 (EGRGSLRSVSDHFP) and 278-293 (GEDRSSPAEDSMDRME). The segment at 303 to 326 (FICPFCGTLCPDSSFLEEHIKLMH) adopts a C2H2-type 1 zinc-finger fold. A compositionally biased stretch (low complexity) spans 333 to 345 (QSTSAGSSSQAEG). The segment at 333 to 359 (QSTSAGSSSQAEGDSGEAGPASRGARE) is disordered. 4 C2H2-type zinc fingers span residues 366 to 388 (YECGDCGRHFNYLGNLRQHQRIH), 394 to 416 (FVCPECGERFRHTARLKSHRLSH), 423 to 445 (FPCPQCGKGFPVLSGLKRHQRVH), and 451 to 473 (YACPQCGRRFKELGNLYTHMRIH). A C2H2-type 6; degenerate zinc finger spans residues 479–501 (YTCYQCGRSFRHLGTYKSHRCMP). Positions 502–528 (ATQMPSEHSPPWAQEDKVQTGRLQGYV) are disordered.

Belongs to the krueppel C2H2-type zinc-finger protein family.

It is found in the nucleus. In terms of biological role, probable transcription factor. Important for development and migration of oligodendrocyte precursor cells, and normal myelination of axons in the central nervous system (CNS). Functions autonomously in oligodendrocytes to promote CNS myelination. Seems to act in parallel with notch3 during oligodendrocyte development. The chain is Zinc finger protein 16-like from Danio rerio (Zebrafish).